The sequence spans 526 residues: Reelin domain-containing protein 1 (526 aa).

The signal sequence occupies residues 1 to 23; the sequence is MRMQAALVGWACTTLCLASCSSA. The Reelin domain maps to 24–179; it reads FSHGASTVAC…SAHSDDRMEP (156 aa). Topologically, residues 24 to 443 are extracellular; the sequence is FSHGASTVAC…PLGIQLRTPQ (420 aa). Disordered stretches follow at residues 242 to 272, 294 to 336, and 370 to 398; these read DAET…PTLE, FASS…TVTQ, and LQTS…LPQS. A compositionally biased stretch (polar residues) spans 245 to 271; sequence TLSQPSSHTATEGSINQQPSGDSNPTL. The span at 385–396 shows a compositional bias: polar residues; it reads SEASRASASFLP. Residues 444 to 462 traverse the membrane as a helical segment; it reads LGILLCLSATLGMALAAGL. Residues 463 to 526 lie on the Cytoplasmic side of the membrane; it reads RYLHTQYCHQ…PSVGSKKTVL (64 aa).

Its subcellular location is the membrane. The protein is Reelin domain-containing protein 1 of Homo sapiens (Human).